The primary structure comprises 154 residues: AP-1 complex subunit sigma-3 (154 aa).

Belongs to the adaptor complexes small subunit family. In terms of assembly, adaptor protein complex 1 (AP-1) is a heterotetramer composed of two large adaptins (gamma-type subunit AP1G1 and beta-type subunit AP1B1), a medium adaptin (mu-type subunit AP1M1 or AP1M2) and a small adaptin (sigma-type subunit AP1S1 or AP1S2 or AP1S3).

It localises to the golgi apparatus. It is found in the cytoplasmic vesicle membrane. The protein localises to the membrane. The protein resides in the clathrin-coated pit. Subunit of clathrin-associated adaptor protein complex 1 that plays a role in protein sorting in the late-Golgi/trans-Golgi network (TGN) and/or endosomes. The AP complexes mediate both the recruitment of clathrin to membranes and the recognition of sorting signals within the cytosolic tails of transmembrane cargo molecules. Involved in TLR3 trafficking. The chain is AP-1 complex subunit sigma-3 (Ap1s3) from Mus musculus (Mouse).